Here is a 428-residue protein sequence, read N- to C-terminus: Histidine--tRNA ligase (428 aa).

It belongs to the class-II aminoacyl-tRNA synthetase family.

It localises to the cytoplasm. The enzyme catalyses tRNA(His) + L-histidine + ATP = L-histidyl-tRNA(His) + AMP + diphosphate + H(+). The sequence is that of Histidine--tRNA ligase from Sulfolobus acidocaldarius (strain ATCC 33909 / DSM 639 / JCM 8929 / NBRC 15157 / NCIMB 11770).